Reading from the N-terminus, the 375-residue chain is GTPase HflX (375 aa).

The region spanning 194-371 (PHIAIVGYAS…RIATLLAGTK (178 aa)) is the Hflx-type G domain. Residues 200 to 207 (GYASAGKT), 225 to 229 (FTTIT), 246 to 249 (DTVG), 314 to 317 (NKID), and 349 to 351 (SAK) each bind GTP. The Mg(2+) site is built by threonine 207 and threonine 227.

This sequence belongs to the TRAFAC class OBG-HflX-like GTPase superfamily. HflX GTPase family. Monomer. Associates with the 50S ribosomal subunit. Mg(2+) serves as cofactor.

It localises to the cytoplasm. GTPase that associates with the 50S ribosomal subunit and may have a role during protein synthesis or ribosome biogenesis. This chain is GTPase HflX, found in Hyperthermus butylicus (strain DSM 5456 / JCM 9403 / PLM1-5).